The chain runs to 150 residues: Large ribosomal subunit protein bL9 (150 aa).

This sequence belongs to the bacterial ribosomal protein bL9 family.

Its function is as follows. Binds to the 23S rRNA. This is Large ribosomal subunit protein bL9 from Shewanella loihica (strain ATCC BAA-1088 / PV-4).